A 273-amino-acid polypeptide reads, in one-letter code: Large ribosomal subunit protein uL2 (273 aa).

Positions 221-263 are disordered; sequence RGTAMNPVDHPHGGGEGRNFGKHPVSPWGLKTKGKKTRRNKRT. Over residues 252–263 the composition is skewed to basic residues; sequence TKGKKTRRNKRT.

This sequence belongs to the universal ribosomal protein uL2 family. Part of the 50S ribosomal subunit. Forms a bridge to the 30S subunit in the 70S ribosome.

Its function is as follows. One of the primary rRNA binding proteins. Required for association of the 30S and 50S subunits to form the 70S ribosome, for tRNA binding and peptide bond formation. It has been suggested to have peptidyltransferase activity; this is somewhat controversial. Makes several contacts with the 16S rRNA in the 70S ribosome. The polypeptide is Large ribosomal subunit protein uL2 (Buchnera aphidicola subsp. Cinara cedri (strain Cc)).